The chain runs to 550 residues: Solute carrier family 22 member 6 (550 aa).

Residues 1-9 (MAFNDLLQQ) are Cytoplasmic-facing. Residues 10-30 (VGGVGRFQQIQVTLVVLPLLL) traverse the membrane as a helical segment. Residues 31–135 (MASHNTLQNF…LVCSHRALRQ (105 aa)) are Extracellular-facing. N-linked (GlcNAc...) asparagine glycosylation is found at Asn39, Asn92, and Asn113. Residues 136–156 (LAQSLYMVGVLLGAMVFGYLA) form a helical membrane-spanning segment. Topologically, residues 157–164 (DRLGRRKV) are cytoplasmic. The helical transmembrane segment at 165–187 (LILNYLQTAVSGTCTAFAPNFSI) threads the bilayer. The Extracellular segment spans residues 188 to 195 (YCAFRLLS). A helical transmembrane segment spans residues 196 to 216 (GMSLAGISLNCMTLNVEWMPI). Residues 217-224 (HTRACVGT) lie on the Cytoplasmic side of the membrane. A helical membrane pass occupies residues 225 to 245 (LIGYVYSLGQFLLAGVAYAVP). At 246–248 (HWR) the chain is on the extracellular side. The helical transmembrane segment at 249–269 (HLQLLVSAPFFAFFIYSWFFI) threads the bilayer. Over 270-337 (ESARWHSSSG…ELLRCPTLRH (68 aa)) the chain is Cytoplasmic. The chain crosses the membrane as a helical span at residues 338-358 (LFLCLSMLWFATSFAYYGLVM). Topologically, residues 359-368 (DLQGFGVSIY) are extracellular. A helical transmembrane segment spans residues 369–389 (LIQVIFGAVDLPAKLVGFLVI). Residues 390-395 (NSLGRR) are Cytoplasmic-facing. A helical transmembrane segment spans residues 396–416 (PAQMAALLLAGICILLNGVIP). The Extracellular segment spans residues 417-420 (QDQS). The chain crosses the membrane as a helical span at residues 421-444 (IVRTSLAVPGKGCLAASFNCIFLY). At 445-455 (TGELYPTMIRQ) the chain is on the cytoplasmic side. The helical transmembrane segment at 456-475 (TGMGMGSTMARVGSIVSPLV) threads the bilayer. Topologically, residues 476-484 (SMTAELYPS) are extracellular. The helical transmembrane segment at 485 to 505 (MPLFIYGAVPVAASAVTVLLP) threads the bilayer. Residues 506–550 (ETLGQPLPDTVQDLESRKGKQTRQQQEHQKYMVPLQASAQEKNGL) lie on the Cytoplasmic side of the membrane. The disordered stretch occupies residues 514–550 (DTVQDLESRKGKQTRQQQEHQKYMVPLQASAQEKNGL).

Belongs to the major facilitator (TC 2.A.1) superfamily. Organic cation transporter (TC 2.A.1.19) family. Post-translationally, glycosylated. Glycosylation is necessary for proper targeting of the transporter to the plasma membrane.

It localises to the cell membrane. The catalysed reaction is prostaglandin F2alpha(out) = prostaglandin F2alpha(in). The enzyme catalyses prostaglandin E2(out) = prostaglandin E2(in). Functionally, involved in the renal elimination of endogenous and exogenous organic anions. Functions as organic anion exchanger when the uptake of one molecule of organic anion is coupled with an efflux of one molecule of endogenous dicarboxylic acid (glutarate, ketoglutarate, etc). Mediates the transport of prostaglandin E2 (PGE2) and prostaglandin F2-alpha (PGF2-alpha) and may be involved in their renal excretion. Also mediates the sodium-independent uptake of p-aminohippurate (PAH), 2,3-dimercapto-1-propanesulfonic acid (DMPS), cidofovir, adefovir, 9-(2-phosphonylmethoxyethyl) guanine (PMEG), 9-(2-phosphonylmethoxyethyl) diaminopurine (PMEDAP), ochratoxin (OTA), acyclovir (ACV), 3'-azido-3-'deoxythymidine (AZT), cimetidine (CMD), 2,4-dichloro-phenoxyacetate (2,4-D), hippurate (HA), indoleacetate (IA), indoxyl sulfate (IS) and 3-carboxy-4-methyl-5-propyl-2-furanpropionate (CMPF) and edaravone sulfate. PAH uptake is inhibited by p-chloromercuribenzenesulphonate (PCMBS), diethyl pyrocarbonate (DEPC), indomethacin, sulindac, diclofenac, carprofen, okadaic acid, benzothiazolylcysteine (BTC), S-chlorotrifluoroethylcysteine (CTFC), cysteine S-conjugates S-dichlorovinylcysteine (DCVC), furosemide, steviol, phorbol 12-myristate 13-acetate (PMA), calcium ionophore A23187, benzylpenicillin, bumetamide, losartan, probenecid, phenol red, urate, glutarate and alpha-ketoglutarate. The protein is Solute carrier family 22 member 6 (SLC22A6) of Pongo abelii (Sumatran orangutan).